The sequence spans 127 residues: Aspartate 1-decarboxylase (127 aa).

Ser25 acts as the Schiff-base intermediate with substrate; via pyruvic acid in catalysis. Ser25 is modified (pyruvic acid (Ser)). Thr57 serves as a coordination point for substrate. Catalysis depends on Tyr58, which acts as the Proton donor. 73–75 (GAA) contacts substrate.

It belongs to the PanD family. As to quaternary structure, heterooctamer of four alpha and four beta subunits. The cofactor is pyruvate. Is synthesized initially as an inactive proenzyme, which is activated by self-cleavage at a specific serine bond to produce a beta-subunit with a hydroxyl group at its C-terminus and an alpha-subunit with a pyruvoyl group at its N-terminus.

The protein localises to the cytoplasm. It carries out the reaction L-aspartate + H(+) = beta-alanine + CO2. The protein operates within cofactor biosynthesis; (R)-pantothenate biosynthesis; beta-alanine from L-aspartate: step 1/1. Catalyzes the pyruvoyl-dependent decarboxylation of aspartate to produce beta-alanine. This is Aspartate 1-decarboxylase from Staphylococcus carnosus (strain TM300).